Here is a 281-residue protein sequence, read N- to C-terminus: Bis(5'-nucleosyl)-tetraphosphatase, symmetrical (281 aa).

It belongs to the Ap4A hydrolase family.

It carries out the reaction P(1),P(4)-bis(5'-adenosyl) tetraphosphate + H2O = 2 ADP + 2 H(+). Its function is as follows. Hydrolyzes diadenosine 5',5'''-P1,P4-tetraphosphate to yield ADP. The protein is Bis(5'-nucleosyl)-tetraphosphatase, symmetrical of Acidovorax ebreus (strain TPSY) (Diaphorobacter sp. (strain TPSY)).